Reading from the N-terminus, the 460-residue chain is uncharacterized protein (460 aa).

The region spanning 5 to 63 (TWHQGELIEVAIADLSDTGDGVGRFAERVVFVPDTVPGDRVLVRLLHVKPNYAHGKLHQ) is the TRAM domain. [4Fe-4S] cluster-binding residues include cysteine 76, cysteine 82, cysteine 85, and cysteine 164. Residues glutamine 288, tyrosine 317, glutamate 338, and aspartate 383 each contribute to the S-adenosyl-L-methionine site. The Nucleophile role is filled by cysteine 410.

This sequence belongs to the class I-like SAM-binding methyltransferase superfamily. RNA M5U methyltransferase family.

This is an uncharacterized protein from Nostoc sp. (strain PCC 7120 / SAG 25.82 / UTEX 2576).